The chain runs to 201 residues: 3-isopropylmalate dehydratase small subunit (201 aa).

It belongs to the LeuD family. LeuD type 1 subfamily. In terms of assembly, heterodimer of LeuC and LeuD.

It carries out the reaction (2R,3S)-3-isopropylmalate = (2S)-2-isopropylmalate. Its pathway is amino-acid biosynthesis; L-leucine biosynthesis; L-leucine from 3-methyl-2-oxobutanoate: step 2/4. Its function is as follows. Catalyzes the isomerization between 2-isopropylmalate and 3-isopropylmalate, via the formation of 2-isopropylmaleate. This chain is 3-isopropylmalate dehydratase small subunit, found in Shewanella oneidensis (strain ATCC 700550 / JCM 31522 / CIP 106686 / LMG 19005 / NCIMB 14063 / MR-1).